Consider the following 878-residue polypeptide: Protein daughter of sevenless (878 aa).

Residues 3-113 (RTFYEGWLIK…WVNCICQVCH (111 aa)) enclose the PH domain. The tract at residues 132 to 176 (ENRTQHTSSSGGLSNSTQNTTTTSLHSSAGTTAPQASVPNAGGSA) is disordered. A compositionally biased stretch (low complexity) spans 136 to 159 (QHTSSSGGLSNSTQNTTTTSLHSS). Polar residues predominate over residues 160–169 (AGTTAPQASV). Residues 246-275 (ALIQAQAAAAAAEQLQQQQQQAARLAVSAN) adopt a coiled-coil conformation. The segment at 391–437 (NNNASKQRSDSDSESVFTDDDEWAHPLPLRENVDRSTRPSDSSIENE) is disordered. Residue S399 is modified to Phosphoserine. T481 bears the Phosphothreonine mark. 2 interaction with DRK regions span residues 638 to 650 (DCPPVNRKLKPKV) and 690 to 702 (GPPSVDRKCKPNA). Disordered stretches follow at residues 686 to 721 (QQPIGPPSVDRKCKPNAYKLGNSATMSPATRRSSGA) and 749 to 773 (LPRQQHRHHPNSPGSMSVQHQRTAS). 2 stretches are compositionally biased toward polar residues: residues 707–718 (NSATMSPATRRS) and 760–770 (SPGSMSVQHQR). T771 carries the phosphothreonine modification. Residues Y801 and Y854 each carry the phosphotyrosine modification.

As to quaternary structure, interacts with DRK. Post-translationally, phosphorylated on Tyr-801 and Tyr-854 in response to sevenless activation, which initiates the recruitment of the phosphatase CSW.

The protein resides in the cytoplasm. Its subcellular location is the membrane. In terms of biological role, essential component for signaling from various receptor tyrosine kinases such as Sevenless, TORSO and DER. Required for photoreceptor cell and wing development. This is Protein daughter of sevenless (dos) from Drosophila melanogaster (Fruit fly).